Here is a 352-residue protein sequence, read N- to C-terminus: Coproporphyrin III ferrochelatase (352 aa).

S52 and Y121 together coordinate Fe-coproporphyrin III. Positions 181 and 269 each coordinate Fe(2+).

It belongs to the ferrochelatase family.

Its subcellular location is the cytoplasm. The catalysed reaction is Fe-coproporphyrin III + 2 H(+) = coproporphyrin III + Fe(2+). Its pathway is porphyrin-containing compound metabolism; protoheme biosynthesis. Functionally, involved in coproporphyrin-dependent heme b biosynthesis. Catalyzes the insertion of ferrous iron into coproporphyrin III to form Fe-coproporphyrin III. This is Coproporphyrin III ferrochelatase from Nocardia farcinica (strain IFM 10152).